The following is a 548-amino-acid chain: Hydroxylamine reductase (548 aa).

Positions 3, 6, 15, and 21 each coordinate [4Fe-4S] cluster. Hybrid [4Fe-2O-2S] cluster contacts are provided by His240, Glu264, Cys308, Cys402, Cys430, Cys455, Glu490, and Lys492. Cys402 is subject to Cysteine persulfide.

It belongs to the HCP family. [4Fe-4S] cluster serves as cofactor. Requires hybrid [4Fe-2O-2S] cluster as cofactor.

The protein localises to the cytoplasm. It carries out the reaction A + NH4(+) + H2O = hydroxylamine + AH2 + H(+). Functionally, catalyzes the reduction of hydroxylamine to form NH(3) and H(2)O. This is Hydroxylamine reductase from Parabacteroides distasonis (strain ATCC 8503 / DSM 20701 / CIP 104284 / JCM 5825 / NCTC 11152).